We begin with the raw amino-acid sequence, 159 residues long: Protein A40 (159 aa).

Topologically, residues 1–9 (MNKHKTDYA) are cytoplasmic. A helical; Signal-anchor for type II membrane protein membrane pass occupies residues 10 to 30 (GYACCVICGLIVGIIFTATLL). Residues 31–159 (KVVERKLVHT…TPKLHSCYTI (129 aa)) are Extracellular-facing. Residues 63 to 159 (YNNKCIHLST…TPKLHSCYTI (97 aa)) enclose the C-type lectin domain.

The protein belongs to the poxviridae A40 protein family.

It localises to the host membrane. The sequence is that of Protein A40 from Bos taurus (Bovine).